The sequence spans 680 residues: MEDYIILSKCGQGTYGSVFKGIHKITHSLVALKRVTDIAQEDGEPVEVKYLNQLKNLSNIVNLRDHFYIDKNSVLVLIMEFIEGDLWKIMSNPQCTLSLGQIKNFTKQLLEGVKQCHVNGIMHRDIKPANLLITTNGVLKLTDFGLSTSYSKRSEKFLSSNVVSLYYRPPELLLGSCIYGPEIDMWSVGCILMEMINNSYLFAGADETAQLDLIFKLFGCPTEKSWPGVSSLPGYNDLFNKQQQQQQNENNYSKQHNNNNNNNNNNNNNNNNNNNNNNNNNNNNNNKYNNISTSCLQSPSSSPPIGGYASSLSSDFNSNEYNGYNQTFSNEDCLAISQKKLIDKFPHLVLLPSVLDLASKMLTLDPKKRINSLEALEHPWFKSSNDMDQIVPFSKDFTDLANRYIASTRQLQQQQHHHQQQQQQQQQQQQQQQPHQQQLIQRQHQEQQQQQLIQRQQEQSKQQLIQHHQQSVNQQQLAQQQQLAQHQQYNSQQHQQHHQQQHQQHQQHQQQQQQQQQQQQQQQQQQQQQQQQQQQQQQQYHQHQQQYHQYQQQYHQPSQQQQQQQQQQQQQQQQQQQQQQQQQQQQQQQQQQQQQQQQQQHQYQPPQQYNHQPPQHQHQHQHQHQHQHQHQHQPQPQHQHQPQPQPQPTPTPTPTSTPTTTTIPPTITTTIQPTISKSNG.

Positions 4-381 constitute a Protein kinase domain; that stretch reads YIILSKCGQG…SLEALEHPWF (378 aa). ATP is bound by residues 10-18 and Lys-33; that span reads CGQGTYGSV. The active-site Proton acceptor is the Asp-125. Disordered regions lie at residues 243–299, 409–444, 483–507, and 597–680; these read QQQQ…LQSP, RQLQ…QRQH, LAQH…QHQQ, and QQQQ…KSNG. The span at 257–286 shows a compositional bias: low complexity; it reads NNNNNNNNNNNNNNNNNNNNNNNNNNNNNN. Over residues 287–297 the composition is skewed to polar residues; the sequence is KYNNISTSCLQ. Low complexity-rich tracts occupy residues 410–444, 483–494, and 597–616; these read QLQQ…QRQH, LAQHQQYNSQQH, and QQQQ…PPQH. Over residues 617 to 631 the composition is skewed to basic residues; that stretch reads QHQHQHQHQHQHQHQ. A compositionally biased stretch (low complexity) spans 632-642; the sequence is HQPQPQHQHQP. Pro residues predominate over residues 643–655; sequence QPQPQPTPTPTPT. Residues 656–680 are compositionally biased toward low complexity; that stretch reads STPTTTTIPPTITTTIQPTISKSNG.

The protein belongs to the protein kinase superfamily. CMGC Ser/Thr protein kinase family. CDC2/CDKX subfamily.

It carries out the reaction L-seryl-[protein] + ATP = O-phospho-L-seryl-[protein] + ADP + H(+). The enzyme catalyses L-threonyl-[protein] + ATP = O-phospho-L-threonyl-[protein] + ADP + H(+). The polypeptide is Putative cyclin-dependent serine/threonine-protein kinase DDB_G0272797/DDB_G0274007 (Dictyostelium discoideum (Social amoeba)).